The following is a 572-amino-acid chain: MKVSELFMPTMKETPSDAEIESHKLMLRSGFMRQLSSGIYVYLPLGYRVLRKIENIVREEMDRAGAQEVHMSALMPKELWEESGRWAVFGPEMFKIKDRNEREYCLGPTHEEAFTYIVRNEVTSYRDLPKILYQIQTKFRDERRPRFGVMRCREFTMKDAYSFDMNEEGLDISYKKMYDAYVRIFKRCGLDVKIVEADTGAMGGSNSHEFMVPSSVGEAEIAYCKACGYAANLEKAECLDEPVENTEEIKQMQEVYTPNVRTIEELVNFLNIDAKRFVKTMIYRADDKFVAVLVRGDREVNETKLKNLLKANELELANAEDVERITGAKVGFAGPVGLSIEIYADNEVKYLKNFVVGSNKTDYHIKNVNLSDFKVTKFADLRNITQDDLCPKCLSQKVTIERGIEVGHIFKLGTKYTEAFNCVYTDEKGEKKLMIMGCYGIGINRTAAAIIEQMHDEDGIIWPITVAPYEVIVVPVNIKDEQQSKIAFEIYEDLQKKGVEVLIDDRDERAGVKFKDADLIGIPFRVTIGRKIADGRIEVRNRRTKESVEVDIESAVEFILNLINEEKARYKV.

The protein belongs to the class-II aminoacyl-tRNA synthetase family. ProS type 1 subfamily. As to quaternary structure, homodimer.

It localises to the cytoplasm. It catalyses the reaction tRNA(Pro) + L-proline + ATP = L-prolyl-tRNA(Pro) + AMP + diphosphate. Its function is as follows. Catalyzes the attachment of proline to tRNA(Pro) in a two-step reaction: proline is first activated by ATP to form Pro-AMP and then transferred to the acceptor end of tRNA(Pro). As ProRS can inadvertently accommodate and process non-cognate amino acids such as alanine and cysteine, to avoid such errors it has two additional distinct editing activities against alanine. One activity is designated as 'pretransfer' editing and involves the tRNA(Pro)-independent hydrolysis of activated Ala-AMP. The other activity is designated 'posttransfer' editing and involves deacylation of mischarged Ala-tRNA(Pro). The misacylated Cys-tRNA(Pro) is not edited by ProRS. The protein is Proline--tRNA ligase of Caldicellulosiruptor saccharolyticus (strain ATCC 43494 / DSM 8903 / Tp8T 6331).